The sequence spans 277 residues: uncharacterized protein (277 aa).

7 helical membrane passes run 23 to 43 (CIGG…TAFI), 61 to 81 (FLIY…IIGG), 117 to 137 (LVLL…FGIF), 144 to 164 (IIGA…VISL), 197 to 217 (YIIL…IVVL), 221 to 241 (IIDI…IIYI), and 243 to 263 (IKGI…VFSI).

The protein to M.jannaschii MJ1189.

The protein resides in the cell membrane. This is an uncharacterized protein from Methanocaldococcus jannaschii (strain ATCC 43067 / DSM 2661 / JAL-1 / JCM 10045 / NBRC 100440) (Methanococcus jannaschii).